A 431-amino-acid chain; its full sequence is Serine hydroxymethyltransferase 1 (431 aa).

(6S)-5,6,7,8-tetrahydrofolate contacts are provided by residues Leu-127 and 131 to 133 (GHL). An N6-(pyridoxal phosphate)lysine modification is found at Lys-236. Residue Glu-252 coordinates (6S)-5,6,7,8-tetrahydrofolate.

This sequence belongs to the SHMT family. In terms of assembly, homodimer. It depends on pyridoxal 5'-phosphate as a cofactor.

The protein resides in the cytoplasm. The catalysed reaction is (6R)-5,10-methylene-5,6,7,8-tetrahydrofolate + glycine + H2O = (6S)-5,6,7,8-tetrahydrofolate + L-serine. The protein operates within one-carbon metabolism; tetrahydrofolate interconversion. It functions in the pathway amino-acid biosynthesis; glycine biosynthesis; glycine from L-serine: step 1/1. Catalyzes the reversible interconversion of serine and glycine with tetrahydrofolate (THF) serving as the one-carbon carrier. This reaction serves as the major source of one-carbon groups required for the biosynthesis of purines, thymidylate, methionine, and other important biomolecules. Also exhibits THF-independent aldolase activity toward beta-hydroxyamino acids, producing glycine and aldehydes, via a retro-aldol mechanism. The sequence is that of Serine hydroxymethyltransferase 1 from Rhizobium meliloti (strain 1021) (Ensifer meliloti).